Consider the following 297-residue polypeptide: Ribosomal protein L11 methyltransferase (297 aa).

Residues threonine 139, glycine 164, aspartate 186, and asparagine 233 each contribute to the S-adenosyl-L-methionine site.

Belongs to the methyltransferase superfamily. PrmA family.

It is found in the cytoplasm. It carries out the reaction L-lysyl-[protein] + 3 S-adenosyl-L-methionine = N(6),N(6),N(6)-trimethyl-L-lysyl-[protein] + 3 S-adenosyl-L-homocysteine + 3 H(+). Its function is as follows. Methylates ribosomal protein L11. This chain is Ribosomal protein L11 methyltransferase, found in Trichodesmium erythraeum (strain IMS101).